A 482-amino-acid chain; its full sequence is Keratin, type I cytoskeletal 39 (482 aa).

A disordered region spans residues 1–24 (MDTKGSTVTISSSTPPQNCSGNTN). The head stretch occupies residues 1 to 91 (MDTKGSTVTI…RCTEGINTHE (91 aa)). The 312-residue stretch at 91 to 402 (EKETMQILNE…SLLESLDGRL (312 aa)) folds into the IF rod domain. The interval 92–126 (KETMQILNERLANYLEKVRMLEGENADLEDKIQEA) is coil 1A. The linker 1 stretch occupies residues 127-137 (CSKALPILCPD). Residues 138–238 (YLSYYTTIEE…HEEEVNSLQC (101 aa)) form a coil 1B region. Positions 239–254 (QLGDRINIEVTAAPSV) are linker 12. A coil 2 region spans residues 255 to 398 (DLNQILQEMR…ATYRSLLESL (144 aa)). The tract at residues 399–482 (DGRLPCNPCA…PCYITRATKV (84 aa)) is tail.

Belongs to the intermediate filament family. In terms of assembly, heterotetramer of two type I and two type II keratins.

Functionally, may play a role in late hair differentiation. This chain is Keratin, type I cytoskeletal 39 (Krt39), found in Mus musculus (Mouse).